Here is a 480-residue protein sequence, read N- to C-terminus: Phenylalanine--tRNA ligase alpha subunit (480 aa).

L-phenylalanine-binding residues include Thr-324 and Phe-407. Mg(2+) is bound at residue Glu-409. Position 432 (Phe-432) interacts with L-phenylalanine.

It belongs to the class-II aminoacyl-tRNA synthetase family. Phe-tRNA synthetase alpha subunit type 2 subfamily. Tetramer of two alpha and two beta subunits. Mg(2+) serves as cofactor.

The protein resides in the cytoplasm. The catalysed reaction is tRNA(Phe) + L-phenylalanine + ATP = L-phenylalanyl-tRNA(Phe) + AMP + diphosphate + H(+). The polypeptide is Phenylalanine--tRNA ligase alpha subunit (Methanocaldococcus jannaschii (strain ATCC 43067 / DSM 2661 / JAL-1 / JCM 10045 / NBRC 100440) (Methanococcus jannaschii)).